The following is a 123-amino-acid chain: Small ribosomal subunit protein uS12cz/uS12cy/uS12cx/uS12w (123 aa).

Residues 1–13 show a composition bias toward polar residues; that stretch reads MPTSNQLLRNSRQ. The segment at 1–30 is disordered; it reads MPTSNQLLRNSRQPVRKTKKTPALRGCPQR. Positions 14 to 30 are enriched in basic residues; sequence PVRKTKKTPALRGCPQR.

It belongs to the universal ribosomal protein uS12 family. Part of the 30S ribosomal subunit.

The protein localises to the plastid. It localises to the chloroplast. In terms of biological role, with S4 and S5 plays an important role in translational accuracy. Located at the interface of the 30S and 50S subunits. This is Small ribosomal subunit protein uS12cz/uS12cy/uS12cx/uS12w (rps12-A) from Pelargonium hortorum (Common geranium).